A 533-amino-acid polypeptide reads, in one-letter code: Calcium/calmodulin-dependent protein kinase type II subunit delta (533 aa).

Residue Ala2 is modified to N-acetylalanine. The Protein kinase domain maps to 14-272 (YQLFEELGKG…ASEALKHPWI (259 aa)). Residues 20–28 (LGKGAFSVV) and Lys43 contribute to the ATP site. Asp136 acts as the Proton acceptor in catalysis. The interval 283–292 (HRQETVDCLK) is autoinhibitory domain. Residue Thr287 is modified to Phosphothreonine; by autocatalysis. A calmodulin-binding region spans residues 291–301 (LKKFNARRKLK). Thr306 and Thr307 each carry phosphothreonine; by autocatalysis. Ser315 carries the phosphoserine modification. Lys318 is subject to N6-acetyllysine. Phosphoserine is present on residues Ser319 and Ser364. A disordered region spans residues 337 to 375 (TSPKENIPTPALEPQTTVIHNPDGNKESTESSNTTIEDE). Position 365 is a phosphothreonine (Thr365). Ser367 is subject to Phosphoserine. Residues Thr370 and Thr371 each carry the phosphothreonine modification. 3 positions are modified to phosphoserine: Ser438, Ser524, and Ser528.

The protein belongs to the protein kinase superfamily. CAMK Ser/Thr protein kinase family. CaMK subfamily. In terms of assembly, CAMK2 is composed of 4 different chains: alpha (CAMK2A), beta (CAMK2B), gamma (CAMK2G), and delta (CAMK2D). The different isoforms assemble into homo- or heteromultimeric holoenzymes composed of 12 subunits with two hexameric rings stacked one on top of the other. Interacts with RRAD and CACNB2. Post-translationally, autophosphorylation of Thr-287 following activation by Ca(2+)/calmodulin. Phosphorylation of Thr-287 locks the kinase into an activated state. As to expression, expressed in liver.

It localises to the cell membrane. It is found in the sarcolemma. The protein localises to the sarcoplasmic reticulum membrane. It catalyses the reaction L-seryl-[protein] + ATP = O-phospho-L-seryl-[protein] + ADP + H(+). The catalysed reaction is L-threonyl-[protein] + ATP = O-phospho-L-threonyl-[protein] + ADP + H(+). With respect to regulation, activated by Ca(2+)/calmodulin. Binding of calmodulin results in conformational change that relieves intrasteric autoinhibition and allows autophosphorylation of Thr-287 which turns the kinase in a constitutively active form and confers to the kinase a Ca(2+)-independent activity. Its function is as follows. Calcium/calmodulin-dependent protein kinase involved in the regulation of Ca(2+) homeostatis and excitation-contraction coupling (ECC) in heart by targeting ion channels, transporters and accessory proteins involved in Ca(2+) influx into the myocyte, Ca(2+) release from the sarcoplasmic reticulum (SR), SR Ca(2+) uptake and Na(+) and K(+) channel transport. Targets also transcription factors and signaling molecules to regulate heart function. In its activated form, is involved in the pathogenesis of dilated cardiomyopathy and heart failure. Contributes to cardiac decompensation and heart failure by regulating SR Ca(2+) release via direct phosphorylation of RYR2 Ca(2+) channel on 'Ser-2808'. In the nucleus, phosphorylates the MEF2 repressor HDAC4, promoting its nuclear export and binding to 14-3-3 protein, and expression of MEF2 and genes involved in the hypertrophic program. Is essential for left ventricular remodeling responses to myocardial infarction. In pathological myocardial remodeling acts downstream of the beta adrenergic receptor signaling cascade to regulate key proteins involved in ECC. Regulates Ca(2+) influx to myocytes by binding and phosphorylating the L-type Ca(2+) channel subunit beta-2 CACNB2. In addition to Ca(2+) channels, can target and regulate the cardiac sarcolemmal Na(+) channel Nav1.5/SCN5A and the K+ channel Kv4.3/KCND3, which contribute to arrhythmogenesis in heart failure. Phosphorylates phospholamban (PLN/PLB), an endogenous inhibitor of SERCA2A/ATP2A2, contributing to the enhancement of SR Ca(2+) uptake that may be important in frequency-dependent acceleration of relaxation (FDAR) and maintenance of contractile function during acidosis. May participate in the modulation of skeletal muscle function in response to exercise, by regulating SR Ca(2+) transport through phosphorylation of PLN/PLB and triadin, a ryanodine receptor-coupling factor. In response to interferon-gamma (IFN-gamma) stimulation, catalyzes phosphorylation of STAT1, stimulating the JAK-STAT signaling pathway. This is Calcium/calmodulin-dependent protein kinase type II subunit delta (CAMK2D) from Oryctolagus cuniculus (Rabbit).